Reading from the N-terminus, the 242-residue chain is Endoglucanase-5 (242 aa).

The signal sequence occupies residues 1–17 (MKATLVLGSLIVGAVSA). The interval 18–182 (YKATTTRYYD…ETDPTPVLGN (165 aa)) is catalytic. Catalysis depends on Asp-27, which acts as the Nucleophile. Asp-134 serves as the catalytic Proton donor. The segment at 177 to 206 (TPVLGNDTGSTPPGSSPPATSSSPPSGGGQ) is disordered. Asn-182 carries an N-linked (GlcNAc...) asparagine glycan. Residues 184 to 201 (TGSTPPGSSPPATSSSPP) are compositionally biased toward low complexity. In terms of domain architecture, CBM1 spans 205 to 241 (GQQTLYGQCGGAGWTGPTTCQAPGTCKVQNQWYSQCL). Intrachain disulfides connect Cys-213/Cys-230 and Cys-224/Cys-240.

Belongs to the glycosyl hydrolase 45 (cellulase K) family.

The enzyme catalyses Endohydrolysis of (1-&gt;4)-beta-D-glucosidic linkages in cellulose, lichenin and cereal beta-D-glucans.. The polypeptide is Endoglucanase-5 (egl5) (Hypocrea jecorina (Trichoderma reesei)).